We begin with the raw amino-acid sequence, 181 residues long: Large ribosomal subunit protein uL5 (181 aa).

Belongs to the universal ribosomal protein uL5 family. Part of the 50S ribosomal subunit; part of the 5S rRNA/L5/L18/L25 subcomplex. Contacts the 5S rRNA and the P site tRNA. Forms a bridge to the 30S subunit in the 70S ribosome.

This is one of the proteins that bind and probably mediate the attachment of the 5S RNA into the large ribosomal subunit, where it forms part of the central protuberance. In the 70S ribosome it contacts protein S13 of the 30S subunit (bridge B1b), connecting the 2 subunits; this bridge is implicated in subunit movement. Contacts the P site tRNA; the 5S rRNA and some of its associated proteins might help stabilize positioning of ribosome-bound tRNAs. This chain is Large ribosomal subunit protein uL5, found in Colwellia psychrerythraea (strain 34H / ATCC BAA-681) (Vibrio psychroerythus).